The following is a 108-amino-acid chain: Small ribosomal subunit protein eS25w (108 aa).

The interval Met1 to Lys36 is disordered. Residues Lys22–Gly31 are compositionally biased toward basic residues.

It belongs to the eukaryotic ribosomal protein eS25 family.

The polypeptide is Small ribosomal subunit protein eS25w (RPS25E) (Arabidopsis thaliana (Mouse-ear cress)).